A 493-amino-acid polypeptide reads, in one-letter code: Dipeptide permease D (493 aa).

13 helical membrane passes run 14-34 (VVALQIWEYFSFYGMRALLIL), 49-69 (ALFSAYCSLVYVTPILGGYLA), 91-111 (LVLGASEIAPTFLYLSLAIIV), 138-158 (GGFSLLYAAGNVGSIVAPIAC), 167-187 (WAMGFALAAIGMVAGLIIFLC), 212-232 (NWGWLLVLLTIAPLAIAVLFW), 235-255 (WAVYALIVATAIGLAVLGKIY), 267-287 (LGLIVTLTFFSMLFWAFAQQG), 312-332 (MFQSVNAFAVMLCGVVLAWLI), 344-364 (IWGKFALGLGLMSAGFSILTL), 379-399 (LMIAGLAVMGFAELFIDPVAM), 413-433 (VLTGIYMLLSGAIANYLAGVI), and 458-478 (VFSEITWGALACVGLVLLIWL).

This sequence belongs to the major facilitator superfamily. Proton-dependent oligopeptide transporter (POT/PTR) (TC 2.A.17) family. DtpD subfamily.

The protein resides in the cell inner membrane. Probable proton-dependent permease that transports dipeptides. The sequence is that of Dipeptide permease D from Citrobacter rodentium (strain ICC168) (Citrobacter freundii biotype 4280).